The primary structure comprises 341 residues: 4-hydroxythreonine-4-phosphate dehydrogenase (341 aa).

Thr126 serves as a coordination point for substrate. Positions 161, 206, and 272 each coordinate a divalent metal cation. 3 residues coordinate substrate: Lys280, Asn289, and Arg298.

This sequence belongs to the PdxA family. As to quaternary structure, homodimer. It depends on a divalent metal cation as a cofactor.

The protein localises to the cytoplasm. It catalyses the reaction 4-(phosphooxy)-L-threonine + NAD(+) = 3-amino-2-oxopropyl phosphate + CO2 + NADH. It participates in cofactor biosynthesis; pyridoxine 5'-phosphate biosynthesis; pyridoxine 5'-phosphate from D-erythrose 4-phosphate: step 4/5. Catalyzes the NAD(P)-dependent oxidation of 4-(phosphooxy)-L-threonine (HTP) into 2-amino-3-oxo-4-(phosphooxy)butyric acid which spontaneously decarboxylates to form 3-amino-2-oxopropyl phosphate (AHAP). The chain is 4-hydroxythreonine-4-phosphate dehydrogenase from Thermosynechococcus vestitus (strain NIES-2133 / IAM M-273 / BP-1).